The chain runs to 1391 residues: DNA-directed RNA polymerase subunit beta'' (1391 aa).

Zn(2+) is bound by residues Cys-224, Cys-295, Cys-302, and Cys-305.

This sequence belongs to the RNA polymerase beta' chain family. RpoC2 subfamily. In plastids the minimal PEP RNA polymerase catalytic core is composed of four subunits: alpha, beta, beta', and beta''. When a (nuclear-encoded) sigma factor is associated with the core the holoenzyme is formed, which can initiate transcription. Zn(2+) serves as cofactor.

The protein resides in the plastid. It is found in the chloroplast. It catalyses the reaction RNA(n) + a ribonucleoside 5'-triphosphate = RNA(n+1) + diphosphate. Functionally, DNA-dependent RNA polymerase catalyzes the transcription of DNA into RNA using the four ribonucleoside triphosphates as substrates. In Buxus microphylla (Littleleaf boxwood), this protein is DNA-directed RNA polymerase subunit beta''.